Consider the following 543-residue polypeptide: Carboxypeptidase Y homolog A (543 aa).

An N-terminal signal peptide occupies residues Met-1–Ala-17. The propeptide occupies Pro-18–Lys-124. Intrachain disulfides connect Cys-179–Cys-419, Cys-313–Cys-327, Cys-337–Cys-360, Cys-344–Cys-353, and Cys-382–Cys-389. Asn-210 carries an N-linked (GlcNAc...) asparagine glycan. Residue Ser-266 is part of the active site. Residue Asp-458 is part of the active site. N-linked (GlcNAc...) asparagine glycosylation occurs at Asn-509. The active site involves His-520.

It belongs to the peptidase S10 family.

It is found in the vacuole. It catalyses the reaction Release of a C-terminal amino acid with broad specificity.. In terms of biological role, vacuolar carboxypeptidase involved in degradation of small peptides. Digests preferentially peptides containing an aliphatic or hydrophobic residue in P1' position, as well as methionine, leucine or phenylalanine in P1 position of ester substrate. The polypeptide is Carboxypeptidase Y homolog A (cpyA) (Neosartorya fischeri (strain ATCC 1020 / DSM 3700 / CBS 544.65 / FGSC A1164 / JCM 1740 / NRRL 181 / WB 181) (Aspergillus fischerianus)).